A 273-amino-acid polypeptide reads, in one-letter code: Glutamate 5-kinase (273 aa).

Lysine 15 is an ATP binding site. Substrate contacts are provided by serine 55, aspartate 142, and asparagine 158. ATP-binding positions include 178–179 and 220–226; these read SD and TGGMLSK.

It belongs to the glutamate 5-kinase family.

The protein resides in the cytoplasm. The catalysed reaction is L-glutamate + ATP = L-glutamyl 5-phosphate + ADP. The protein operates within amino-acid biosynthesis; L-proline biosynthesis; L-glutamate 5-semialdehyde from L-glutamate: step 1/2. Functionally, catalyzes the transfer of a phosphate group to glutamate to form L-glutamate 5-phosphate. The protein is Glutamate 5-kinase of Streptococcus pyogenes serotype M49 (strain NZ131).